A 1064-amino-acid polypeptide reads, in one-letter code: Carbamoyl phosphate synthase large chain (1064 aa).

Positions 1–401 (MPKRNDIKKI…SLLKAVRSLE (401 aa)) are carboxyphosphate synthetic domain. Arginine 129, arginine 169, glycine 175, glycine 176, glutamate 208, isoleucine 210, glutamate 215, glycine 241, valine 242, histidine 243, glutamine 284, and glutamate 298 together coordinate ATP. The ATP-grasp 1 domain occupies 133–327 (KELCESINEP…IAKMSAKIAI (195 aa)). Residues glutamine 284, glutamate 298, and asparagine 300 each contribute to the Mg(2+) site. Positions 284, 298, and 300 each coordinate Mn(2+). Residues 402-546 (IGVFHNEMTE…YSTYEWENES (145 aa)) form an oligomerization domain region. Positions 547 to 929 (KRSDKEKIIV…ALYKSFEAAK (383 aa)) are carbamoyl phosphate synthetic domain. Residues 671–861 (EKALQDLDIP…MAQLATQMIL (191 aa)) form the ATP-grasp 2 domain. The ATP site is built by arginine 707, serine 746, leucine 748, glutamate 752, glycine 777, valine 778, histidine 779, serine 780, glutamine 820, and glutamate 832. Mg(2+)-binding residues include glutamine 820, glutamate 832, and asparagine 834. 3 residues coordinate Mn(2+): glutamine 820, glutamate 832, and asparagine 834. Residues 930–1064 (LHMADYGSVL…QSRSFTTKNI (135 aa)) form the MGS-like domain. Positions 930–1064 (LHMADYGSVL…QSRSFTTKNI (135 aa)) are allosteric domain.

It belongs to the CarB family. Composed of two chains; the small (or glutamine) chain promotes the hydrolysis of glutamine to ammonia, which is used by the large (or ammonia) chain to synthesize carbamoyl phosphate. Tetramer of heterodimers (alpha,beta)4. Requires Mg(2+) as cofactor. It depends on Mn(2+) as a cofactor.

It catalyses the reaction hydrogencarbonate + L-glutamine + 2 ATP + H2O = carbamoyl phosphate + L-glutamate + 2 ADP + phosphate + 2 H(+). The enzyme catalyses hydrogencarbonate + NH4(+) + 2 ATP = carbamoyl phosphate + 2 ADP + phosphate + 2 H(+). Its pathway is amino-acid biosynthesis; L-arginine biosynthesis; carbamoyl phosphate from bicarbonate: step 1/1. It functions in the pathway pyrimidine metabolism; UMP biosynthesis via de novo pathway; (S)-dihydroorotate from bicarbonate: step 1/3. In terms of biological role, large subunit of the glutamine-dependent carbamoyl phosphate synthetase (CPSase). CPSase catalyzes the formation of carbamoyl phosphate from the ammonia moiety of glutamine, carbonate, and phosphate donated by ATP, constituting the first step of 2 biosynthetic pathways, one leading to arginine and/or urea and the other to pyrimidine nucleotides. The large subunit (synthetase) binds the substrates ammonia (free or transferred from glutamine from the small subunit), hydrogencarbonate and ATP and carries out an ATP-coupled ligase reaction, activating hydrogencarbonate by forming carboxy phosphate which reacts with ammonia to form carbamoyl phosphate. In Lactococcus lactis subsp. cremoris (strain MG1363), this protein is Carbamoyl phosphate synthase large chain.